A 338-amino-acid polypeptide reads, in one-letter code: Phosphatidylglycerol--prolipoprotein diacylglyceryl transferase (338 aa).

The next 4 membrane-spanning stretches (helical) occupy residues tryptophan 24–valine 44, leucine 67–tyrosine 87, glycine 115–tryptophan 135, and phenylalanine 141–glycine 161. Arginine 162 serves as a coordination point for a 1,2-diacyl-sn-glycero-3-phospho-(1'-sn-glycerol). A run of 3 helical transmembrane segments spans residues proline 224 to leucine 244, glycine 252 to phenylalanine 272, and glycine 304 to leucine 324.

Belongs to the Lgt family.

Its subcellular location is the cell inner membrane. It catalyses the reaction L-cysteinyl-[prolipoprotein] + a 1,2-diacyl-sn-glycero-3-phospho-(1'-sn-glycerol) = an S-1,2-diacyl-sn-glyceryl-L-cysteinyl-[prolipoprotein] + sn-glycerol 1-phosphate + H(+). It functions in the pathway protein modification; lipoprotein biosynthesis (diacylglyceryl transfer). Functionally, catalyzes the transfer of the diacylglyceryl group from phosphatidylglycerol to the sulfhydryl group of the N-terminal cysteine of a prolipoprotein, the first step in the formation of mature lipoproteins. This is Phosphatidylglycerol--prolipoprotein diacylglyceryl transferase from Treponema denticola (strain ATCC 35405 / DSM 14222 / CIP 103919 / JCM 8153 / KCTC 15104).